A 368-amino-acid polypeptide reads, in one-letter code: Flagellar P-ring protein (368 aa).

The signal sequence occupies residues 1–22 (MLIPLARAVLALALLGAGAAHA).

It belongs to the FlgI family. In terms of assembly, the basal body constitutes a major portion of the flagellar organelle and consists of four rings (L,P,S, and M) mounted on a central rod.

It localises to the periplasm. The protein resides in the bacterial flagellum basal body. Its function is as follows. Assembles around the rod to form the L-ring and probably protects the motor/basal body from shearing forces during rotation. The chain is Flagellar P-ring protein from Bordetella bronchiseptica (strain ATCC BAA-588 / NCTC 13252 / RB50) (Alcaligenes bronchisepticus).